The primary structure comprises 156 residues: Small ribosomal subunit protein uS7 (156 aa).

The protein belongs to the universal ribosomal protein uS7 family. As to quaternary structure, part of the 30S ribosomal subunit. Contacts proteins S9 and S11.

Its function is as follows. One of the primary rRNA binding proteins, it binds directly to 16S rRNA where it nucleates assembly of the head domain of the 30S subunit. Is located at the subunit interface close to the decoding center, probably blocks exit of the E-site tRNA. The polypeptide is Small ribosomal subunit protein uS7 (Streptococcus pyogenes serotype M3 (strain ATCC BAA-595 / MGAS315)).